The sequence spans 427 residues: Glutamate-1-semialdehyde 2,1-aminomutase (427 aa).

Lys-265 is modified (N6-(pyridoxal phosphate)lysine).

Belongs to the class-III pyridoxal-phosphate-dependent aminotransferase family. HemL subfamily. As to quaternary structure, homodimer. The cofactor is pyridoxal 5'-phosphate.

The protein localises to the cytoplasm. The catalysed reaction is (S)-4-amino-5-oxopentanoate = 5-aminolevulinate. Its pathway is porphyrin-containing compound metabolism; protoporphyrin-IX biosynthesis; 5-aminolevulinate from L-glutamyl-tRNA(Glu): step 2/2. In Pseudomonas fluorescens (strain Pf0-1), this protein is Glutamate-1-semialdehyde 2,1-aminomutase.